Reading from the N-terminus, the 352-residue chain is Glycerol-1-phosphate dehydrogenase [NAD(P)+] (352 aa).

NAD(+) contacts are provided by residues 99–103 (GTKID) and 121–124 (TSPS). Position 126 (D126) interacts with substrate. An NAD(+)-binding site is contributed by S130. D173 lines the substrate pocket. Positions 173 and 253 each coordinate Zn(2+). Residue H257 participates in substrate binding. A Zn(2+)-binding site is contributed by H269.

This sequence belongs to the glycerol-1-phosphate dehydrogenase family. The cofactor is Zn(2+).

It is found in the cytoplasm. The enzyme catalyses sn-glycerol 1-phosphate + NAD(+) = dihydroxyacetone phosphate + NADH + H(+). It catalyses the reaction sn-glycerol 1-phosphate + NADP(+) = dihydroxyacetone phosphate + NADPH + H(+). It participates in membrane lipid metabolism; glycerophospholipid metabolism. Catalyzes the NAD(P)H-dependent reduction of dihydroxyacetonephosphate (DHAP or glycerone phosphate) to glycerol 1-phosphate (G1P). The G1P thus generated is used as the glycerophosphate backbone of phospholipids in the cellular membranes of Archaea. This Thermoplasma volcanium (strain ATCC 51530 / DSM 4299 / JCM 9571 / NBRC 15438 / GSS1) protein is Glycerol-1-phosphate dehydrogenase [NAD(P)+].